We begin with the raw amino-acid sequence, 462 residues long: B3 domain-containing protein REM8 (462 aa).

DNA-binding regions (TF-B3) lie at residues 11–103 (NKHF…LGPS), 148–243 (CFSQ…LCSR), and 249–346 (FVKL…FSKI). A disordered region spans residues 351 to 419 (FEAEDRRHKR…NLQKTQACSV (69 aa)). Basic and acidic residues predominate over residues 369-397 (ETDKGEPSRATKMGPELEKREKTAEKGEP). Polar residues predominate over residues 399 to 418 (RASNKSSGKQGNLQKTQACS).

Its subcellular location is the nucleus. This chain is B3 domain-containing protein REM8 (REM8), found in Arabidopsis thaliana (Mouse-ear cress).